The chain runs to 452 residues: Tubulin gamma chain (452 aa).

142-148 contributes to the GTP binding site; that stretch reads AGGTGSG.

It belongs to the tubulin family.

It localises to the cytoplasm. The protein resides in the cytoskeleton. It is found in the microtubule organizing center. The protein localises to the centrosome. Functionally, tubulin is the major constituent of microtubules. The gamma chain is found at microtubule organizing centers (MTOC) such as the spindle poles or the centrosome, suggesting that it is involved in the minus-end nucleation of microtubule assembly. The chain is Tubulin gamma chain (G-TUB) from Plasmodium falciparum (isolate NF54).